The following is a 415-amino-acid chain: D-galactonate dehydratase family member RspA (415 aa).

Positions 48 and 133 each coordinate substrate. The active-site Proton donor/acceptor is tyrosine 170. Aspartate 223 is a binding site for Mg(2+). Histidine 225 (proton donor/acceptor) is an active-site residue. Glutamate 249, aspartate 250, and glutamate 275 together coordinate Mg(2+). Residues glutamate 275, arginine 296, histidine 325, aspartate 329, and glutamate 352 each coordinate substrate.

It belongs to the mandelate racemase/muconate lactonizing enzyme family. GalD subfamily. The cofactor is Mg(2+).

It catalyses the reaction D-mannonate = 2-dehydro-3-deoxy-D-gluconate + H2O. In terms of biological role, has low D-mannonate dehydratase activity (in vitro), suggesting that this is not a physiological substrate and that it has no significant role in D-mannonate degradation in vivo. Has no detectable activity with a panel of 70 other acid sugars (in vitro). This Escherichia coli O6:H1 (strain CFT073 / ATCC 700928 / UPEC) protein is D-galactonate dehydratase family member RspA (rspA).